The following is a 415-amino-acid chain: Transposase for insertion sequence element IS1081 (415 aa).

The protein belongs to the transposase mutator family.

In terms of biological role, required for the transposition of the insertion element. In Mycobacterium bovis (strain ATCC BAA-935 / AF2122/97), this protein is Transposase for insertion sequence element IS1081.